Reading from the N-terminus, the 579-residue chain is V-type ATP synthase alpha chain (579 aa).

Glycine 238–threonine 245 contacts ATP.

Belongs to the ATPase alpha/beta chains family.

It catalyses the reaction ATP + H2O + 4 H(+)(in) = ADP + phosphate + 5 H(+)(out). Produces ATP from ADP in the presence of a proton gradient across the membrane. The V-type alpha chain is a catalytic subunit. This is V-type ATP synthase alpha chain from Borrelia hermsii (strain HS1 / DAH).